Reading from the N-terminus, the 239-residue chain is Transmembrane emp24 domain-containing protein 6 (239 aa).

The first 21 residues, 1–21 (MFPLLLVAELVVLSLVTSVKS), serve as a signal peptide directing secretion. Residues 22-200 (QETDPLHGSK…FFLLQSNYTY (179 aa)) are Lumenal-facing. The region spanning 53–138 (IECFWQFADQ…SIQVYLNFGV (86 aa)) is the GOLD domain. Asn156 and Asn197 each carry an N-linked (GlcNAc...) asparagine glycan. A helical membrane pass occupies residues 201–223 (VNWWSTAQSLAIVLSGALQLYFL). Topologically, residues 224-239 (KRLFTASTTDTKKPRC) are cytoplasmic.

The protein belongs to the EMP24/GP25L family.

The protein localises to the endoplasmic reticulum membrane. The sequence is that of Transmembrane emp24 domain-containing protein 6 (Tmed6) from Mus musculus (Mouse).